A 299-amino-acid polypeptide reads, in one-letter code: MNLNMRTDVEPRTEIPPVVITGLSGAGLSSAARVLEDMGWYVTQNIPSQFVVQLVELCADPHSPVDKIAIVSDVRSKEFSGSLEEVISELSGLGLKPLVVFMDARNDVLIKRFDNLRRTHPLQGSGTLLVGIEREREIMNQIKESADVVIDTSDLSIHDLRRSIELNFNGIANKLQHVTVQSFGFKHGSPRDTDLLIDVRFLPNPFWVPELRPFRGTDKPVSDYVLADEGAQKFLDNFTRMLRDMRPGFKHEGKNFITVSVGCTGGHHRSVAIAEELARRLREVPDLDVSVNHRDIARN.

22–29 (GLSGAGLS) contributes to the ATP binding site. A GTP-binding site is contributed by 73–76 (DVRS).

This sequence belongs to the RapZ-like family.

Displays ATPase and GTPase activities. This chain is Nucleotide-binding protein DIP1313, found in Corynebacterium diphtheriae (strain ATCC 700971 / NCTC 13129 / Biotype gravis).